Reading from the N-terminus, the 202-residue chain is Imidazoleglycerol-phosphate dehydratase (202 aa).

This sequence belongs to the imidazoleglycerol-phosphate dehydratase family. Homotrimer.

It carries out the reaction D-erythro-1-(imidazol-4-yl)glycerol 3-phosphate = 3-(imidazol-4-yl)-2-oxopropyl phosphate + H2O. Its pathway is amino-acid biosynthesis; L-histidine biosynthesis; L-histidine from 5-phospho-alpha-D-ribose 1-diphosphate: step 6/9. The sequence is that of Imidazoleglycerol-phosphate dehydratase (HIS3) from Cryptococcus neoformans var. neoformans serotype D (strain B-3501A) (Filobasidiella neoformans).